Consider the following 161-residue polypeptide: uncharacterized protein (161 aa).

A helical transmembrane segment spans residues 16-36 (KLGLVVAIFFFMMGTTVVVLY).

The protein localises to the membrane. This is an uncharacterized protein from Encephalitozoon cuniculi (strain GB-M1) (Microsporidian parasite).